Here is a 236-residue protein sequence, read N- to C-terminus: 2,3,4,5-tetrahydropyridine-2,6-dicarboxylate N-acetyltransferase (236 aa).

Belongs to the transferase hexapeptide repeat family. DapH subfamily.

The enzyme catalyses (S)-2,3,4,5-tetrahydrodipicolinate + acetyl-CoA + H2O = L-2-acetamido-6-oxoheptanedioate + CoA. Its pathway is amino-acid biosynthesis; L-lysine biosynthesis via DAP pathway; LL-2,6-diaminopimelate from (S)-tetrahydrodipicolinate (acetylase route): step 1/3. Catalyzes the transfer of an acetyl group from acetyl-CoA to tetrahydrodipicolinate. This is 2,3,4,5-tetrahydropyridine-2,6-dicarboxylate N-acetyltransferase from Brevibacillus brevis (strain 47 / JCM 6285 / NBRC 100599).